We begin with the raw amino-acid sequence, 37 residues long: Large ribosomal subunit protein bL36 (37 aa).

This sequence belongs to the bacterial ribosomal protein bL36 family.

The chain is Large ribosomal subunit protein bL36 from Brevibacillus brevis (strain 47 / JCM 6285 / NBRC 100599).